The chain runs to 166 residues: Cofilin-2 (166 aa).

Ala2 is modified (N-acetylalanine). Ser3 is modified (phosphoserine). The ADF-H domain occupies Gly4–Leu153. Thr6 is subject to Phosphothreonine. A Nuclear localization signal motif is present at residues Lys30–Lys34.

The protein belongs to the actin-binding proteins ADF family. In terms of processing, the phosphorylation of Ser-24 may prevent recognition of the nuclear localization signal.

It is found in the nucleus matrix. Its subcellular location is the cytoplasm. It localises to the cytoskeleton. In terms of biological role, controls reversibly actin polymerization and depolymerization in a pH-sensitive manner. It has the ability to bind G- and F-actin in a 1:1 ratio of cofilin to actin. It is the major component of intranuclear and cytoplasmic actin rods. The polypeptide is Cofilin-2 (CFL2) (Bos taurus (Bovine)).